We begin with the raw amino-acid sequence, 174 residues long: ATP-dependent protease subunit HslV (174 aa).

Residue threonine 2 is part of the active site. 3 residues coordinate Na(+): glycine 157, cysteine 160, and threonine 163.

This sequence belongs to the peptidase T1B family. HslV subfamily. In terms of assembly, a double ring-shaped homohexamer of HslV is capped on each side by a ring-shaped HslU homohexamer. The assembly of the HslU/HslV complex is dependent on binding of ATP.

It localises to the cytoplasm. It carries out the reaction ATP-dependent cleavage of peptide bonds with broad specificity.. Allosterically activated by HslU binding. Protease subunit of a proteasome-like degradation complex believed to be a general protein degrading machinery. This Shewanella oneidensis (strain ATCC 700550 / JCM 31522 / CIP 106686 / LMG 19005 / NCIMB 14063 / MR-1) protein is ATP-dependent protease subunit HslV.